The sequence spans 156 residues: Ribosomal RNA large subunit methyltransferase H (156 aa).

S-adenosyl-L-methionine-binding positions include Gly-104 and 123–128; that span reads LSPMVM.

The protein belongs to the RNA methyltransferase RlmH family. As to quaternary structure, homodimer.

It localises to the cytoplasm. The enzyme catalyses pseudouridine(1915) in 23S rRNA + S-adenosyl-L-methionine = N(3)-methylpseudouridine(1915) in 23S rRNA + S-adenosyl-L-homocysteine + H(+). Specifically methylates the pseudouridine at position 1915 (m3Psi1915) in 23S rRNA. The polypeptide is Ribosomal RNA large subunit methyltransferase H (Bdellovibrio bacteriovorus (strain ATCC 15356 / DSM 50701 / NCIMB 9529 / HD100)).